Consider the following 39-residue polypeptide: Beta-theraphotoxin-Cm2a (39 aa).

3 disulfide bridges follow: Cys-7–Cys-21, Cys-14–Cys-26, and Cys-20–Cys-33. Phenylalanine amide is present on Phe-39.

Expressed by the venom gland.

It localises to the secreted. Its function is as follows. Inhibits mammalian voltage-gated sodium channel subtypes Nav1.5/SCN5A and Nav1.8/SCN10A by shifting the voltage dependence of channel activation to more depolarized potentials and by blocking the inward component of the sodium current. In vivo, this toxin causes erect, elevated tail, initial partial ataxia, followed by recovery over approximately 1 hour after injection and the progressive development of shaking. Although paralysis subsides, the body tremors never cease and persist until the end of the experiment. This is Beta-theraphotoxin-Cm2a from Ceratogyrus marshalli (Straighthorned baboon tarantula).